An 864-amino-acid chain; its full sequence is Leukocyte tyrosine kinase receptor (864 aa).

Residues 1 to 16 (MGCWGQLLVWFGAAGA) form the signal peptide. The Extracellular portion of the chain corresponds to 17-424 (ILCSSPGSQE…CMDLHKPPGP (408 aa)). Over residues 30–40 (RSSPLPLASPS) the composition is skewed to low complexity. The interval 30 to 64 (RSSPLPLASPSPRDPKVSAPPSILEPASPLNSPGT) is disordered. 2 cysteine pairs are disulfide-bonded: Cys-73–Cys-86 and Cys-168–Cys-179. Residues 239–297 (YLRPRDRGRTQASPEKLENRSEAPGSGGRGGAAGGGGGWTSRAPSPQAGRSLQEGAEGG) are disordered. The segment covering 241–259 (RPRDRGRTQASPEKLENRS) has biased composition (basic and acidic residues). The N-linked (GlcNAc...) asparagine glycan is linked to Asn-257. Residues 263-277 (GSGGRGGAAGGGGGW) are compositionally biased toward gly residues. A disulfide bond links Cys-300 and Cys-322. Asn-380 and Asn-412 each carry an N-linked (GlcNAc...) asparagine glycan. A helical membrane pass occupies residues 425 to 449 (LVLMVAVVATSTLSLLMVCGVLILV). Over 450–864 (KQKKWQGLQE…QNLWNPTYRS (415 aa)) the chain is Cytoplasmic. A Protein kinase domain is found at 510-786 (VTLLRALGHG…LQYCTQDPDV (277 aa)). ATP is bound by residues 516–524 (LGHGAFGEV) and Lys-544. The Proton acceptor role is filled by Asp-643. Position 676 is a phosphotyrosine; by autocatalysis (Tyr-676). Disordered stretches follow at residues 790-830 (LLPM…KLKS) and 842-864 (SGLK…TYRS). Positions 852 to 864 (LQPQNLWNPTYRS) are enriched in polar residues.

It belongs to the protein kinase superfamily. Tyr protein kinase family. Insulin receptor subfamily. Homodimer; homodimerizes following ligand-binding. Part of a complex including LTK, TNK2 and GRB2, in which GRB2 promotes LTK recruitment by TNK2. Phosphorylated at tyrosine residues by autocatalysis, which activates kinase activity. As to expression, expressed in non-hematopoietic cell lines and T- and B-cell lines.

It is found in the cell membrane. It carries out the reaction L-tyrosyl-[protein] + ATP = O-phospho-L-tyrosyl-[protein] + ADP + H(+). Its activity is regulated as follows. Activated by ligand-binding, leading to homodimerization and autophosphorylation. Functionally, receptor with a tyrosine-protein kinase activity. Following activation by ALKAL1 or ALKAL2 ligands at the cell surface, transduces an extracellular signal into an intracellular response. Ligand-binding to the extracellular domain induces tyrosine kinase activation, leading to activation of the mitogen-activated protein kinase (MAPK) pathway. Phosphorylates almost exclusively at the first tyrosine of the Y-x-x-x-Y-Y motif. The exact function of this protein is not known; studies with chimeric proteins demonstrate its ability to promote growth and specifically neurite outgrowth, and cell survival. Involved in regulation of the secretory pathway involving endoplasmic reticulum (ER) export sites (ERESs) and ER to Golgi transport. The protein is Leukocyte tyrosine kinase receptor of Homo sapiens (Human).